We begin with the raw amino-acid sequence, 269 residues long: Ribosomal RNA small subunit methyltransferase J (269 aa).

S-adenosyl-L-methionine contacts are provided by residues Glu125–Arg126 and Asp179.

The protein belongs to the methyltransferase superfamily. RsmJ family.

The protein localises to the cytoplasm. It carries out the reaction guanosine(1516) in 16S rRNA + S-adenosyl-L-methionine = N(2)-methylguanosine(1516) in 16S rRNA + S-adenosyl-L-homocysteine + H(+). Its function is as follows. Specifically methylates the guanosine in position 1516 of 16S rRNA. In Pseudomonas syringae pv. tomato (strain ATCC BAA-871 / DC3000), this protein is Ribosomal RNA small subunit methyltransferase J.